We begin with the raw amino-acid sequence, 80 residues long: Large ribosomal subunit protein bL31B (80 aa).

This sequence belongs to the bacterial ribosomal protein bL31 family. Type B subfamily. As to quaternary structure, part of the 50S ribosomal subunit.

This is Large ribosomal subunit protein bL31B from Xanthomonas axonopodis pv. citri (strain 306).